The following is a 327-amino-acid chain: uncharacterized protein (327 aa).

Disordered regions lie at residues 127–170 (LSEF…GIYR) and 298–327 (NFED…LKRR). Ser-153, Ser-154, and Ser-309 each carry phosphoserine. The span at 317 to 327 (YRKRKKNLKRR) shows a compositional bias: basic residues.

This is an uncharacterized protein from Schizosaccharomyces pombe (strain 972 / ATCC 24843) (Fission yeast).